Reading from the N-terminus, the 30-residue chain is Trypsin inhibitor 1 (30 aa).

3 disulfide bridges follow: C4–C21, C11–C23, and C17–C29.

The protein belongs to the protease inhibitor I7 (squash-type serine protease inhibitor) family.

Its subcellular location is the secreted. Inhibits trypsin. This chain is Trypsin inhibitor 1, found in Citrullus lanatus (Watermelon).